Reading from the N-terminus, the 172-residue chain is Xanthine-guanine phosphoribosyltransferase (172 aa).

5-phospho-alpha-D-ribose 1-diphosphate contacts are provided by residues 47–48 (RG) and 106–114 (DDLVDTGKT). Mg(2+) is bound at residue Asp-107. 2 residues coordinate guanine: Asp-110 and Ile-153. 2 residues coordinate xanthine: Asp-110 and Ile-153. GMP contacts are provided by residues 110–114 (DTGKT) and 152–153 (WI).

It belongs to the purine/pyrimidine phosphoribosyltransferase family. XGPT subfamily. As to quaternary structure, homotetramer. The cofactor is Mg(2+).

The protein resides in the cell inner membrane. It catalyses the reaction GMP + diphosphate = guanine + 5-phospho-alpha-D-ribose 1-diphosphate. The catalysed reaction is XMP + diphosphate = xanthine + 5-phospho-alpha-D-ribose 1-diphosphate. It carries out the reaction IMP + diphosphate = hypoxanthine + 5-phospho-alpha-D-ribose 1-diphosphate. The protein operates within purine metabolism; GMP biosynthesis via salvage pathway; GMP from guanine: step 1/1. It participates in purine metabolism; XMP biosynthesis via salvage pathway; XMP from xanthine: step 1/1. Its function is as follows. Purine salvage pathway enzyme that catalyzes the transfer of the ribosyl-5-phosphate group from 5-phospho-alpha-D-ribose 1-diphosphate (PRPP) to the N9 position of the 6-oxopurines guanine and xanthine to form the corresponding ribonucleotides GMP (guanosine 5'-monophosphate) and XMP (xanthosine 5'-monophosphate), with the release of PPi. To a lesser extent, also acts on hypoxanthine. The sequence is that of Xanthine-guanine phosphoribosyltransferase from Rhodopseudomonas palustris (strain BisB5).